Reading from the N-terminus, the 432-residue chain is Enolase (432 aa).

A (2R)-2-phosphoglycerate-binding site is contributed by Gln-167. Catalysis depends on Glu-209, which acts as the Proton donor. Asp-246, Glu-290, and Asp-317 together coordinate Mg(2+). Residues Lys-342, Arg-371, Ser-372, and Lys-393 each contribute to the (2R)-2-phosphoglycerate site. Lys-342 functions as the Proton acceptor in the catalytic mechanism.

The protein belongs to the enolase family. As to quaternary structure, component of the RNA degradosome, a multiprotein complex involved in RNA processing and mRNA degradation. Mg(2+) is required as a cofactor.

It is found in the cytoplasm. The protein localises to the secreted. The protein resides in the cell surface. The enzyme catalyses (2R)-2-phosphoglycerate = phosphoenolpyruvate + H2O. The protein operates within carbohydrate degradation; glycolysis; pyruvate from D-glyceraldehyde 3-phosphate: step 4/5. Its function is as follows. Catalyzes the reversible conversion of 2-phosphoglycerate (2-PG) into phosphoenolpyruvate (PEP). It is essential for the degradation of carbohydrates via glycolysis. In Shigella sonnei (strain Ss046), this protein is Enolase.